The primary structure comprises 520 residues: MTEISILNDVQKIIVLDYGSQYNQLIARRIREFGVFSELKSHKITAQELREINPIGIVLSGGPNSVYADNAFGIDPEIFELGIPILGICYGMQLITHKLGGKVVPAGQAGNREYGQSTLHLRETSKLFSGTPQEQLVLMSHGDAVTEIPEGFHLVGDSNDCPYAAIENTEKNLYGIQFHPEVRHSVYGNDILKNFAISICGARGDWSMDNFIDMEIAKIRETVGDRKVLLGLSGGVDSSVVGVLLQKAIGDQLTCIFVDHGLLRKDEGDQVMGMLGGKFGLNIIRVDASKRFLDLLADVEDPEKKRKIIGNEFVYVFDDEASKLKGVDFLAQGTLYTDIIESGTETAQTIKSHHNVGGLPEDMQFELIEPLNTLFKDEVRALGIALGMPEEIVWRQPFPGPGLAIRVMGAITEEKLETVRESDAILREEIAKAGLDRDVWQYFTVNTGVRSVGVMGDGRTYDYTIAIRAITSIDGMTADFAQLPWDVLKKISTRIVNEVDHVNRIVYDITSKPPATVEWE.

A Glutamine amidotransferase type-1 domain is found at K12 to D205. C89 acts as the Nucleophile in catalysis. Active-site residues include H179 and E181. The GMPS ATP-PPase domain occupies W206–R395. S233 to S239 is a binding site for ATP.

Homodimer.

The catalysed reaction is XMP + L-glutamine + ATP + H2O = GMP + L-glutamate + AMP + diphosphate + 2 H(+). The protein operates within purine metabolism; GMP biosynthesis; GMP from XMP (L-Gln route): step 1/1. Catalyzes the synthesis of GMP from XMP. The chain is GMP synthase [glutamine-hydrolyzing] from Streptococcus pyogenes serotype M1.